A 324-amino-acid chain; its full sequence is Fibronectin type III domain-containing protein 8 (324 aa).

Residues 179–280 (PDTPFIFEHT…KPYKFATLAT (102 aa)) form the Fibronectin type-III domain.

This Macaca fascicularis (Crab-eating macaque) protein is Fibronectin type III domain-containing protein 8 (FNDC8).